The primary structure comprises 481 residues: Heat stress transcription factor A-1b (481 aa).

Residues 1–16 (MESVPESVPSPNSNTP) show a composition bias toward low complexity. A disordered region spans residues 1–23 (MESVPESVPSPNSNTPSIPPPVN). Residues 25–119 (VPPFLSKTYD…LLKSIVRRKP (95 aa)) mediate DNA binding. The tract at residues 138-204 (ACVEVGKFGI…QMMSFLAKAV (67 aa)) is hydrophobic repeat HR-A/B. Residues 213 to 227 (LVQQNNNDGNRQIPG) show a composition bias toward polar residues. The interval 213–244 (LVQQNNNDGNRQIPGSNKKRRLPVDEQENRGD) is disordered. A Nuclear localization signal motif is present at residues 229-233 (NKKRR). Residues 234–243 (LPVDEQENRG) show a composition bias toward basic and acidic residues. Positions 418 to 427 (DPFWEQFFSV) match the AHA motif. Residues 467–474 (LTEQMGLL) carry the Nuclear export signal motif.

Belongs to the HSF family. Class A subfamily. Homotrimer. Binds to HSBP. Post-translationally, exhibits temperature-dependent phosphorylation.

Its subcellular location is the cytoplasm. It is found in the nucleus. In terms of biological role, transcriptional activator that specifically binds DNA sequence 5'-AGAAnnTTCT-3' known as heat shock promoter elements (HSE). The protein is Heat stress transcription factor A-1b (HSFA1B) of Arabidopsis thaliana (Mouse-ear cress).